A 338-amino-acid polypeptide reads, in one-letter code: tRNA N6-adenosine threonylcarbamoyltransferase (338 aa).

Fe cation-binding residues include histidine 111 and histidine 115. Substrate contacts are provided by residues 134 to 138, aspartate 167, glycine 180, and asparagine 272; that span reads LVSGG. A Fe cation-binding site is contributed by aspartate 300.

It belongs to the KAE1 / TsaD family. Requires Fe(2+) as cofactor.

It is found in the cytoplasm. The enzyme catalyses L-threonylcarbamoyladenylate + adenosine(37) in tRNA = N(6)-L-threonylcarbamoyladenosine(37) in tRNA + AMP + H(+). Required for the formation of a threonylcarbamoyl group on adenosine at position 37 (t(6)A37) in tRNAs that read codons beginning with adenine. Is involved in the transfer of the threonylcarbamoyl moiety of threonylcarbamoyl-AMP (TC-AMP) to the N6 group of A37, together with TsaE and TsaB. TsaD likely plays a direct catalytic role in this reaction. The polypeptide is tRNA N6-adenosine threonylcarbamoyltransferase (Vibrio parahaemolyticus serotype O3:K6 (strain RIMD 2210633)).